The primary structure comprises 158 residues: Transcription elongation factor GreA (158 aa).

Basic and acidic residues predominate over residues 24-43 (DVERPKASEAIGEARDKGDL). The segment at 24 to 47 (DVERPKASEAIGEARDKGDLSENA) is disordered. Positions 48–68 (EYDAAKEAQGLLEMKISKMEE) form a coiled coil.

Belongs to the GreA/GreB family.

Functionally, necessary for efficient RNA polymerase transcription elongation past template-encoded arresting sites. The arresting sites in DNA have the property of trapping a certain fraction of elongating RNA polymerases that pass through, resulting in locked ternary complexes. Cleavage of the nascent transcript by cleavage factors such as GreA or GreB allows the resumption of elongation from the new 3'terminus. GreA releases sequences of 2 to 3 nucleotides. The protein is Transcription elongation factor GreA of Christiangramia forsetii (strain DSM 17595 / CGMCC 1.15422 / KT0803) (Gramella forsetii).